The primary structure comprises 128 residues: Large ribosomal subunit protein bL17 (128 aa).

It belongs to the bacterial ribosomal protein bL17 family. As to quaternary structure, part of the 50S ribosomal subunit. Contacts protein L32.

This is Large ribosomal subunit protein bL17 from Streptococcus pneumoniae serotype 4 (strain ATCC BAA-334 / TIGR4).